The sequence spans 389 residues: Diaminopimelate decarboxylase (389 aa).

Lys58 is modified (N6-(pyridoxal phosphate)lysine). Residues Gly233 and 271–274 contribute to the pyridoxal 5'-phosphate site; that span reads ELGR. Residues Arg274, Arg310, Tyr314, Glu342, and Tyr370 each coordinate substrate. Tyr370 is a pyridoxal 5'-phosphate binding site.

The protein belongs to the Orn/Lys/Arg decarboxylase class-II family. LysA subfamily. As to quaternary structure, homodimer. Pyridoxal 5'-phosphate is required as a cofactor.

It carries out the reaction meso-2,6-diaminopimelate + H(+) = L-lysine + CO2. It functions in the pathway amino-acid biosynthesis; L-lysine biosynthesis via DAP pathway; L-lysine from DL-2,6-diaminopimelate: step 1/1. Specifically catalyzes the decarboxylation of meso-diaminopimelate (meso-DAP) to L-lysine. In Francisella tularensis subsp. holarctica (strain LVS), this protein is Diaminopimelate decarboxylase.